A 177-amino-acid chain; its full sequence is ATP synthase subunit delta (177 aa).

Belongs to the ATPase delta chain family. As to quaternary structure, F-type ATPases have 2 components, F(1) - the catalytic core - and F(0) - the membrane proton channel. F(1) has five subunits: alpha(3), beta(3), gamma(1), delta(1), epsilon(1). F(0) has three main subunits: a(1), b(2) and c(10-14). The alpha and beta chains form an alternating ring which encloses part of the gamma chain. F(1) is attached to F(0) by a central stalk formed by the gamma and epsilon chains, while a peripheral stalk is formed by the delta and b chains.

Its subcellular location is the cell inner membrane. F(1)F(0) ATP synthase produces ATP from ADP in the presence of a proton or sodium gradient. F-type ATPases consist of two structural domains, F(1) containing the extramembraneous catalytic core and F(0) containing the membrane proton channel, linked together by a central stalk and a peripheral stalk. During catalysis, ATP synthesis in the catalytic domain of F(1) is coupled via a rotary mechanism of the central stalk subunits to proton translocation. In terms of biological role, this protein is part of the stalk that links CF(0) to CF(1). It either transmits conformational changes from CF(0) to CF(1) or is implicated in proton conduction. The protein is ATP synthase subunit delta of Shewanella frigidimarina (strain NCIMB 400).